A 167-amino-acid polypeptide reads, in one-letter code: Minor fimbrial protein PrsF (167 aa).

The N-terminal stretch at 1 to 18 is a signal peptide; it reads MIRLSLFISLLLTSVAVL.

It is found in the secreted. Its subcellular location is the fimbrium. Fimbriae (also called pili), polar filaments radiating from the surface of the bacterium to a length of 0.5-1.5 micrometers and numbering 100-300 per cell, enable bacteria to colonize the epithelium of specific host organs. The chain is Minor fimbrial protein PrsF (prsF) from Escherichia coli.